Reading from the N-terminus, the 136-residue chain is Succinate dehydrogenase assembly factor 3, mitochondrial (136 aa).

Residues 1-24 (MRASMVRRMAAAASSSASSSLRPA) constitute a mitochondrion transit peptide.

This sequence belongs to the complex I LYR family. SDHAF3 subfamily. As to quaternary structure, interacts with the iron-sulfur protein subunit within the SDH catalytic dimer.

Its subcellular location is the mitochondrion matrix. Functionally, plays an essential role in the assembly of succinate dehydrogenase (SDH), an enzyme complex (also referred to as respiratory complex II) that is a component of both the tricarboxylic acid (TCA) cycle and the mitochondrial electron transport chain, and which couples the oxidation of succinate to fumarate with the reduction of ubiquinone (coenzyme Q) to ubiquinol. Promotes maturation of the iron-sulfur protein subunit of the SDH catalytic dimer, protecting it from the deleterious effects of oxidants. May act together with SDHAF1. The protein is Succinate dehydrogenase assembly factor 3, mitochondrial of Pyricularia oryzae (strain 70-15 / ATCC MYA-4617 / FGSC 8958) (Rice blast fungus).